The following is a 242-amino-acid chain: Triosephosphate isomerase (242 aa).

9–11 serves as a coordination point for substrate; sequence NWK. The active-site Electrophile is the His-99. Glu-169 (proton acceptor) is an active-site residue. Substrate-binding positions include Gly-175, Ser-207, and 228-229; that span reads GG.

This sequence belongs to the triosephosphate isomerase family. As to quaternary structure, homodimer.

It localises to the cytoplasm. It carries out the reaction D-glyceraldehyde 3-phosphate = dihydroxyacetone phosphate. It functions in the pathway carbohydrate biosynthesis; gluconeogenesis. The protein operates within carbohydrate degradation; glycolysis; D-glyceraldehyde 3-phosphate from glycerone phosphate: step 1/1. Its function is as follows. Involved in the gluconeogenesis. Catalyzes stereospecifically the conversion of dihydroxyacetone phosphate (DHAP) to D-glyceraldehyde-3-phosphate (G3P). This Mycoplasma mobile (strain ATCC 43663 / 163K / NCTC 11711) (Mesomycoplasma mobile) protein is Triosephosphate isomerase.